Consider the following 430-residue polypeptide: UPF0597 protein DSY1109 (430 aa).

Belongs to the UPF0597 family.

This is UPF0597 protein DSY1109 from Desulfitobacterium hafniense (strain Y51).